The sequence spans 264 residues: MKKLKLHGFNNLTKSLSFCIYDICYAKTAEERDGYIAYIDELYNANRLTEILSETCSIIGANILNIARQDYEPQGASVTILVSEEPVDPKLIDKTEHPGPLPETVVAHLDKSHICVHTYPESHPEGGLCTFRADIEVSTCGVISPLKALNYLIHQLESDIVTIDYRVRGFTRDINGMKHFIDHEINSIQNFMSDGMKALYDMVDVNVYQENIFHTKMLLKEFDLKHYMFHTKPEDLTDSERQEITAALWKEMREIYYGRNMPAV.

The active-site Schiff-base intermediate with substrate; via pyruvic acid is Ser112. Residue Ser112 is modified to Pyruvic acid (Ser); by autocatalysis. Catalysis depends on His117, which acts as the Proton acceptor; for processing activity. The Proton donor; for catalytic activity role is filled by Cys140.

It belongs to the prokaryotic AdoMetDC family. Type 2 subfamily. As to quaternary structure, heterooctamer of four alpha and four beta chains arranged as a tetramer of alpha/beta heterodimers. Requires pyruvate as cofactor. Post-translationally, is synthesized initially as an inactive proenzyme. Formation of the active enzyme involves a self-maturation process in which the active site pyruvoyl group is generated from an internal serine residue via an autocatalytic post-translational modification. Two non-identical subunits are generated from the proenzyme in this reaction, and the pyruvate is formed at the N-terminus of the alpha chain, which is derived from the carboxyl end of the proenzyme. The post-translation cleavage follows an unusual pathway, termed non-hydrolytic serinolysis, in which the side chain hydroxyl group of the serine supplies its oxygen atom to form the C-terminus of the beta chain, while the remainder of the serine residue undergoes an oxidative deamination to produce ammonia and the pyruvoyl group blocking the N-terminus of the alpha chain.

It carries out the reaction S-adenosyl-L-methionine + H(+) = S-adenosyl 3-(methylsulfanyl)propylamine + CO2. The protein operates within amine and polyamine biosynthesis; S-adenosylmethioninamine biosynthesis; S-adenosylmethioninamine from S-adenosyl-L-methionine: step 1/1. Catalyzes the decarboxylation of S-adenosylmethionine to S-adenosylmethioninamine (dcAdoMet), the propylamine donor required for the synthesis of the polyamines spermine and spermidine from the diamine putrescine. The polypeptide is S-adenosylmethionine decarboxylase proenzyme (Shigella dysenteriae serotype 1 (strain Sd197)).